The following is a 491-amino-acid chain: Equilibrative nucleobase transporter 1 (491 aa).

A helical transmembrane segment spans residues 17-37 (LLECLGFAGVLFGWPSLVFVF). An N-linked (GlcNAc...) asparagine glycan is attached at Asn-56. 5 helical membrane-spanning segments follow: residues 72–92 (LIFT…GYIF), 102–122 (LIAI…SAGS), 123–143 (AVLL…FLIT), 156–176 (STII…FLII), and 188–208 (ASFI…FLLM). Asn-220 and Asn-229 each carry an N-linked (GlcNAc...) asparagine glycan. Position 253 is a phosphoserine (Ser-253). A Phosphothreonine modification is found at Thr-258. Helical transmembrane passes span 279-299 (FAWH…FIGT), 319-339 (TNAF…GLLM), 356-376 (STLA…SLLC), 396-418 (ILQV…LAFP), 427-447 (GLVM…FTLI), and 456-476 (FYVN…PFLV).

It belongs to the SLC43A transporter (TC 2.A.1.44) family. As to expression, widely expressed with highest levels in the liver and lung, followed by the pancreas. Highly expressed in macrophages.

It is found in the basolateral cell membrane. It carries out the reaction adenine(out) = adenine(in). The catalysed reaction is guanine(out) = guanine(in). It catalyses the reaction hypoxanthine(out) = hypoxanthine(in). Its activity is regulated as follows. Adenine transport is strongly inhibited by decynium-22. 6-mercaptopurine-transport is inhibited by 6-thioguanine, 6-methylmercaptopurine and decynium-22. Its function is as follows. Sodium-independent purine-selective nucleobase transporter which mediates the equilibrative transport of extracellular purine nucleobases such as adenine, guanine and hypoxanthine. May regulate fatty acid (FA) transport in adipocytes, acting as a positive regulator of FA efflux and as a negative regulator of FA uptake. Sodium-independent purine-selective nucleobase transporter which mediates the equilibrative transport of extracellular purine nucleobase adenine. Mediates the influx and efflux of the purine nucleobase analog drug 6-mercaptopurine across the membrane. In Homo sapiens (Human), this protein is Equilibrative nucleobase transporter 1 (SLC43A3).